We begin with the raw amino-acid sequence, 960 residues long: Vacuolar membrane protease (960 aa).

Topologically, residues 1 to 57 (MADNNSSSGSLVIDEQDYDVHEAGQQGQQGQQKHQQRQQERPSLITRVFRSVFGYRK) are cytoplasmic. Residues 22-41 (EAGQQGQQGQQKHQQRQQER) are disordered. The segment covering 24-33 (GQQGQQGQQK) has biased composition (low complexity). A helical membrane pass occupies residues 58 to 78 (TSLSLFVVATIALCVSLSYID). At 79–401 (NSVDFISFPT…FTISTSQLFK (323 aa)) the chain is on the vacuolar side. An N-linked (GlcNAc...) asparagine glycan is attached at Asn148. Zn(2+) contacts are provided by His189 and Asp201. Glu235 acts as the Proton acceptor in catalysis. Zn(2+)-binding residues include Glu236, Glu261, and His333. A helical membrane pass occupies residues 402-422 (INVALLTVFPILNGLLLLYTI). Topologically, residues 423 to 432 (RSRKWQVSFS) are cytoplasmic. Residues 433-453 (SAISIPVALLVTMFIVVYLVV) traverse the membrane as a helical segment. At 454 to 476 (ESYKSFNQYLPSSRPLLLVATIT) the chain is on the vacuolar side. The helical transmembrane segment at 477-497 (SILLLVFSIILVAFSFFSIIA) threads the bilayer. Over 498-502 (EENLR) the chain is Cytoplasmic. The chain crosses the membrane as a helical span at residues 503–523 (LLAIVELSFAYWVGLAFTTHG). Topologically, residues 524-535 (LSGAESARHSGE) are vacuolar. Residues 536–556 (FAVSILFTLEAVASFLGLIGW) traverse the membrane as a helical segment. Topologically, residues 557-635 (SLCRNRSHLQ…FGYDWSLQYL (79 aa)) are cytoplasmic. Positions 587 to 605 (NDHDHEHRHGHEDNEHGEA) are enriched in basic and acidic residues. Positions 587-614 (NDHDHEHRHGHEDNEHGEAHVQQQSQSR) are disordered. The chain crosses the membrane as a helical span at residues 636–656 (ITVPLSIFIIYNSGWLVLEGV). Asn657 carries an N-linked (GlcNAc...) asparagine glycan. Over 657 to 668 (NKTLQESAKAET) the chain is Vacuolar. A helical membrane pass occupies residues 669–689 (FVYNLLWIVSVSLVLPLIPFA). Residues 690–696 (GKLNRYM) are Cytoplasmic-facing. Residues 697-717 (VFVLIAIGVLGTLLVHVVQPF) traverse the membrane as a helical segment. Residues 718–960 (NEANPLKLRF…LVAYTKQVHV (243 aa)) are Vacuolar-facing. N-linked (GlcNAc...) asparagine glycans are attached at residues Asn736, Asn763, Asn803, Asn875, and Asn921.

The protein belongs to the peptidase M28 family. Zn(2+) serves as cofactor.

It localises to the vacuole membrane. Its function is as follows. May be involved in vacuolar sorting and osmoregulation. This Lodderomyces elongisporus (strain ATCC 11503 / CBS 2605 / JCM 1781 / NBRC 1676 / NRRL YB-4239) (Yeast) protein is Vacuolar membrane protease.